We begin with the raw amino-acid sequence, 464 residues long: ATP synthase subunit beta (464 aa).

ATP is bound at residue 153-160 (GGAGVGKT).

Belongs to the ATPase alpha/beta chains family. As to quaternary structure, F-type ATPases have 2 components, CF(1) - the catalytic core - and CF(0) - the membrane proton channel. CF(1) has five subunits: alpha(3), beta(3), gamma(1), delta(1), epsilon(1). CF(0) has three main subunits: a(1), b(2) and c(9-12). The alpha and beta chains form an alternating ring which encloses part of the gamma chain. CF(1) is attached to CF(0) by a central stalk formed by the gamma and epsilon chains, while a peripheral stalk is formed by the delta and b chains.

It localises to the cell membrane. The catalysed reaction is ATP + H2O + 4 H(+)(in) = ADP + phosphate + 5 H(+)(out). Produces ATP from ADP in the presence of a proton gradient across the membrane. The catalytic sites are hosted primarily by the beta subunits. The sequence is that of ATP synthase subunit beta from Clostridium novyi (strain NT).